The chain runs to 308 residues: Glutaminase (308 aa).

The substrate site is built by Ser-66, Asn-117, Glu-161, Asn-168, Tyr-192, Tyr-244, and Val-262.

This sequence belongs to the glutaminase family. Homotetramer.

The enzyme catalyses L-glutamine + H2O = L-glutamate + NH4(+). The sequence is that of Glutaminase from Salmonella arizonae (strain ATCC BAA-731 / CDC346-86 / RSK2980).